A 371-amino-acid chain; its full sequence is Heterodimeric geranylgeranyl pyrophosphate synthase large subunit 1, chloroplastic (371 aa).

A chloroplast-targeting transit peptide spans 1–51; that stretch reads MASVTLGSWIVVHHHNHHHPSSILTKSRSRSCPITLTKPISFRSKRTVSSS. The residue at position 52 (Ser-52) is an N-acetylserine. Residues Lys-116, Arg-119, and His-148 each coordinate isopentenyl diphosphate. Residues Asp-155 and Asp-161 each contribute to the Mg(2+) site. A dimethylallyl diphosphate-binding site is contributed by Arg-166. Residue Arg-167 participates in isopentenyl diphosphate binding. Residues Lys-256, Thr-257, Gln-294, Lys-311, and Lys-321 each coordinate dimethylallyl diphosphate.

It belongs to the FPP/GGPP synthase family. Forms homodimers. Part of a heterodimeric geranyl(geranyl)diphosphate synthase. Interacts with GGR. It depends on Mg(2+) as a cofactor. In terms of tissue distribution, expressed ubiquitously.

The protein localises to the plastid. It localises to the chloroplast. It is found in the cytoplasm. It carries out the reaction isopentenyl diphosphate + dimethylallyl diphosphate = (2E)-geranyl diphosphate + diphosphate. It catalyses the reaction isopentenyl diphosphate + (2E)-geranyl diphosphate = (2E,6E)-farnesyl diphosphate + diphosphate. The enzyme catalyses isopentenyl diphosphate + (2E,6E)-farnesyl diphosphate = (2E,6E,10E)-geranylgeranyl diphosphate + diphosphate. It participates in isoprenoid biosynthesis; farnesyl diphosphate biosynthesis; farnesyl diphosphate from geranyl diphosphate and isopentenyl diphosphate: step 1/1. Its pathway is isoprenoid biosynthesis; geranyl diphosphate biosynthesis; geranyl diphosphate from dimethylallyl diphosphate and isopentenyl diphosphate: step 1/1. The protein operates within isoprenoid biosynthesis; geranylgeranyl diphosphate biosynthesis; geranylgeranyl diphosphate from farnesyl diphosphate and isopentenyl diphosphate: step 1/1. Its function is as follows. Heterodimeric geranyl(geranyl)-diphosphate (GPP) synthase large subunit. In vitro, the large subunit catalyzes mainly the trans-addition of the three molecules of IPP onto DMAPP to form geranylgeranyl pyrophosphate while the small subunit alone is inactive. Upon association of the two subunits, the product profile changes and the production of gerany-diphosphate is strongly increased. The sequence is that of Heterodimeric geranylgeranyl pyrophosphate synthase large subunit 1, chloroplastic (GGPPS1) from Arabidopsis thaliana (Mouse-ear cress).